Reading from the N-terminus, the 618-residue chain is Membrane protein insertase YidC (618 aa).

Helical transmembrane passes span 3 to 23, 363 to 383, 439 to 459, 478 to 498, 520 to 540, and 545 to 565; these read KNTI…SFLS, WGLS…IVVF, LPML…PSAI, FITF…FCLL, PQMA…LFVL, and SGLN…MIIL.

It belongs to the OXA1/ALB3/YidC family. Type 1 subfamily. As to quaternary structure, interacts with the Sec translocase complex via SecD. Specifically interacts with transmembrane segments of nascent integral membrane proteins during membrane integration.

Its subcellular location is the cell inner membrane. Functionally, required for the insertion and/or proper folding and/or complex formation of integral membrane proteins into the membrane. Involved in integration of membrane proteins that insert both dependently and independently of the Sec translocase complex, as well as at least some lipoproteins. Aids folding of multispanning membrane proteins. This chain is Membrane protein insertase YidC, found in Bacteroides fragilis (strain ATCC 25285 / DSM 2151 / CCUG 4856 / JCM 11019 / LMG 10263 / NCTC 9343 / Onslow / VPI 2553 / EN-2).